The chain runs to 186 residues: Phosphoheptose isomerase (186 aa).

The region spanning 33–186 is the SIS domain; sequence LCECLKKGGK…TLCQIIDEGF (154 aa). Residue 48–50 participates in substrate binding; the sequence is NGG. The Zn(2+) site is built by His57 and Glu61. Substrate is bound by residues Glu61, 90–91, 116–118, Ser121, and Gln168; these read ND and STS. The Zn(2+) site is built by Gln168 and His176.

The protein belongs to the SIS family. GmhA subfamily. In terms of assembly, homotetramer. Zn(2+) is required as a cofactor.

The protein localises to the cytoplasm. The catalysed reaction is 2 D-sedoheptulose 7-phosphate = D-glycero-alpha-D-manno-heptose 7-phosphate + D-glycero-beta-D-manno-heptose 7-phosphate. Its pathway is carbohydrate biosynthesis; D-glycero-D-manno-heptose 7-phosphate biosynthesis; D-glycero-alpha-D-manno-heptose 7-phosphate and D-glycero-beta-D-manno-heptose 7-phosphate from sedoheptulose 7-phosphate: step 1/1. Functionally, catalyzes the isomerization of sedoheptulose 7-phosphate in D-glycero-D-manno-heptose 7-phosphate. This Campylobacter jejuni subsp. jejuni serotype O:6 (strain 81116 / NCTC 11828) protein is Phosphoheptose isomerase.